A 471-amino-acid polypeptide reads, in one-letter code: Ribulose bisphosphate carboxylase large chain 2 (471 aa).

Positions 116 and 166 each coordinate substrate. The active-site Proton acceptor is the Lys168. Lys170 provides a ligand contact to substrate. Mg(2+) contacts are provided by Lys194, Asp196, and Glu197. N6-carboxylysine is present on Lys194. His287 functions as the Proton acceptor in the catalytic mechanism. Substrate contacts are provided by Arg288, His320, and Ser372.

The protein belongs to the RuBisCO large chain family. Type I subfamily. As to quaternary structure, heterohexadecamer of 8 large chains and 8 small chains; disulfide-linked. The disulfide link is formed within the large subunit homodimers. The cofactor is Mg(2+). Post-translationally, the disulfide bond which can form in the large chain dimeric partners within the hexadecamer appears to be associated with oxidative stress and protein turnover.

The enzyme catalyses 2 (2R)-3-phosphoglycerate + 2 H(+) = D-ribulose 1,5-bisphosphate + CO2 + H2O. It catalyses the reaction D-ribulose 1,5-bisphosphate + O2 = 2-phosphoglycolate + (2R)-3-phosphoglycerate + 2 H(+). In terms of biological role, ruBisCO catalyzes two reactions: the carboxylation of D-ribulose 1,5-bisphosphate, the primary event in carbon dioxide fixation, as well as the oxidative fragmentation of the pentose substrate. Both reactions occur simultaneously and in competition at the same active site. The chain is Ribulose bisphosphate carboxylase large chain 2 from Allochromatium vinosum (strain ATCC 17899 / DSM 180 / NBRC 103801 / NCIMB 10441 / D) (Chromatium vinosum).